Here is a 502-residue protein sequence, read N- to C-terminus: Glycerol kinase (502 aa).

Position 14 (Thr14) interacts with ADP. Positions 14, 15, and 16 each coordinate ATP. Residue Thr14 coordinates sn-glycerol 3-phosphate. Position 18 (Arg18) interacts with ADP. Arg84, Glu85, and Tyr136 together coordinate sn-glycerol 3-phosphate. Residues Arg84, Glu85, and Tyr136 each coordinate glycerol. Residue His232 is modified to Phosphohistidine; by HPr. Asp246 contacts sn-glycerol 3-phosphate. The glycerol site is built by Asp246 and Gln247. The ADP site is built by Thr268 and Gly311. Residues Thr268, Gly311, Gln315, and Gly412 each coordinate ATP. Residues Gly412 and Asn416 each coordinate ADP.

It belongs to the FGGY kinase family. As to quaternary structure, homotetramer and homodimer (in equilibrium). Post-translationally, the phosphoenolpyruvate-dependent sugar phosphotransferase system (PTS), including enzyme I, and histidine-containing protein (HPr) are required for the phosphorylation, which leads to the activation of the enzyme.

The catalysed reaction is glycerol + ATP = sn-glycerol 3-phosphate + ADP + H(+). The protein operates within polyol metabolism; glycerol degradation via glycerol kinase pathway; sn-glycerol 3-phosphate from glycerol: step 1/1. Activated by phosphorylation and inhibited by fructose 1,6-bisphosphate (FBP). Functionally, key enzyme in the regulation of glycerol uptake and metabolism. Catalyzes the phosphorylation of glycerol to yield sn-glycerol 3-phosphate. The sequence is that of Glycerol kinase from Streptococcus sanguinis (strain SK36).